The following is a 138-amino-acid chain: Small ribosomal subunit protein uS8 (138 aa).

This sequence belongs to the universal ribosomal protein uS8 family. Part of the 30S ribosomal subunit. Contacts proteins S5 and S12.

Its function is as follows. One of the primary rRNA binding proteins, it binds directly to 16S rRNA central domain where it helps coordinate assembly of the platform of the 30S subunit. This is Small ribosomal subunit protein uS8 (rpsH) from Thermus thermophilus (strain ATCC BAA-163 / DSM 7039 / HB27).